A 270-amino-acid polypeptide reads, in one-letter code: Tryptophan synthase alpha chain (270 aa).

Residues Glu-49 and Asp-60 each act as proton acceptor in the active site.

Belongs to the TrpA family. Tetramer of two alpha and two beta chains.

It catalyses the reaction (1S,2R)-1-C-(indol-3-yl)glycerol 3-phosphate + L-serine = D-glyceraldehyde 3-phosphate + L-tryptophan + H2O. It participates in amino-acid biosynthesis; L-tryptophan biosynthesis; L-tryptophan from chorismate: step 5/5. In terms of biological role, the alpha subunit is responsible for the aldol cleavage of indoleglycerol phosphate to indole and glyceraldehyde 3-phosphate. In Pseudomonas savastanoi pv. phaseolicola (strain 1448A / Race 6) (Pseudomonas syringae pv. phaseolicola (strain 1448A / Race 6)), this protein is Tryptophan synthase alpha chain.